The chain runs to 281 residues: Orotidine 5'-phosphate decarboxylase (281 aa).

Lysine 94 functions as the Proton donor in the catalytic mechanism.

Belongs to the OMP decarboxylase family. Type 2 subfamily.

It catalyses the reaction orotidine 5'-phosphate + H(+) = UMP + CO2. Its pathway is pyrimidine metabolism; UMP biosynthesis via de novo pathway; UMP from orotate: step 2/2. The protein is Orotidine 5'-phosphate decarboxylase of Thermomicrobium roseum (strain ATCC 27502 / DSM 5159 / P-2).